The chain runs to 257 residues: Pyridoxine 5'-phosphate synthase (257 aa).

Asn6 contributes to the 3-amino-2-oxopropyl phosphate binding site. Residue 8 to 9 participates in 1-deoxy-D-xylulose 5-phosphate binding; it reads DH. Residue Arg17 participates in 3-amino-2-oxopropyl phosphate binding. His42 serves as the catalytic Proton acceptor. Positions 44 and 49 each coordinate 1-deoxy-D-xylulose 5-phosphate. Glu69 acts as the Proton acceptor in catalysis. Thr99 lines the 1-deoxy-D-xylulose 5-phosphate pocket. His211 serves as the catalytic Proton donor. 3-amino-2-oxopropyl phosphate-binding positions include Gly212 and 233-234; that span reads GQ.

Belongs to the PNP synthase family. In terms of assembly, homooctamer; tetramer of dimers.

It is found in the cytoplasm. It carries out the reaction 3-amino-2-oxopropyl phosphate + 1-deoxy-D-xylulose 5-phosphate = pyridoxine 5'-phosphate + phosphate + 2 H2O + H(+). The protein operates within cofactor biosynthesis; pyridoxine 5'-phosphate biosynthesis; pyridoxine 5'-phosphate from D-erythrose 4-phosphate: step 5/5. Its function is as follows. Catalyzes the complicated ring closure reaction between the two acyclic compounds 1-deoxy-D-xylulose-5-phosphate (DXP) and 3-amino-2-oxopropyl phosphate (1-amino-acetone-3-phosphate or AAP) to form pyridoxine 5'-phosphate (PNP) and inorganic phosphate. The chain is Pyridoxine 5'-phosphate synthase from Campylobacter fetus subsp. fetus (strain 82-40).